The primary structure comprises 134 residues: (R)-specific enoyl-CoA hydratase (134 aa).

Positions 5 to 119 (SLEVGQKARL…ATLTTRIFTQ (115 aa)) constitute a MaoC-like domain. A (3R)-3-hydroxyacyl-CoA contacts are provided by residues 32–37 (DFNPLH), G55, and F84.

In terms of assembly, homodimer.

It catalyses the reaction a (3R)-3-hydroxyacyl-CoA = a (2E)-enoyl-CoA + H2O. In terms of biological role, catalyzes the hydration of trans-2-enoyl-CoA with a chain-length of 4-6 carbon atoms, forming the corresponding (3R)-3-hydroxyacyl-CoA. This Aeromonas caviae (Aeromonas punctata) protein is (R)-specific enoyl-CoA hydratase (phaJ).